The primary structure comprises 193 residues: Regulator of free ubiquitin chains 1 (193 aa).

The protein belongs to the RFU1 family.

It is found in the endosome. In terms of biological role, inhibitor of the DOA4 deubiquitinase involved in the regulation of protein degradation by the proteasome and maintenance of a normal level of free ubiquitin. In Eremothecium gossypii (strain ATCC 10895 / CBS 109.51 / FGSC 9923 / NRRL Y-1056) (Yeast), this protein is Regulator of free ubiquitin chains 1 (RFU1).